We begin with the raw amino-acid sequence, 376 residues long: Erythronate-4-phosphate dehydrogenase (376 aa).

Substrate-binding residues include serine 45 and threonine 67. NAD(+) is bound at residue aspartate 147. Residue arginine 209 is part of the active site. Aspartate 233 is an NAD(+) binding site. Glutamate 238 is an active-site residue. Residue histidine 255 is the Proton donor of the active site. Position 258 (glycine 258) interacts with NAD(+). A substrate-binding site is contributed by tyrosine 259.

Belongs to the D-isomer specific 2-hydroxyacid dehydrogenase family. PdxB subfamily. As to quaternary structure, homodimer.

It localises to the cytoplasm. It carries out the reaction 4-phospho-D-erythronate + NAD(+) = (R)-3-hydroxy-2-oxo-4-phosphooxybutanoate + NADH + H(+). The protein operates within cofactor biosynthesis; pyridoxine 5'-phosphate biosynthesis; pyridoxine 5'-phosphate from D-erythrose 4-phosphate: step 2/5. In terms of biological role, catalyzes the oxidation of erythronate-4-phosphate to 3-hydroxy-2-oxo-4-phosphonooxybutanoate. The chain is Erythronate-4-phosphate dehydrogenase from Shewanella sp. (strain MR-4).